Reading from the N-terminus, the 442-residue chain is SPRY domain-containing protein 3 (442 aa).

The B30.2/SPRY domain maps to 17 to 204 (DLNLHYRFLN…VRLHLNAELG (188 aa)). The tract at residues 371–394 (EGEEEEEEEEEEEDGEEIEPEHEG) is disordered. Residues 372–390 (GEEEEEEEEEEEDGEEIEP) show a composition bias toward acidic residues.

This chain is SPRY domain-containing protein 3 (SPRYD3), found in Homo sapiens (Human).